The sequence spans 246 residues: Uridylate kinase (246 aa).

Residue 20–23 (KISG) coordinates ATP. The segment at 28–33 (GDQGYG) is involved in allosteric activation by GTP. Glycine 62 is a binding site for UMP. ATP is bound by residues glycine 63 and arginine 67. Residues aspartate 82 and 143–150 (TGNPYFTT) contribute to the UMP site. ATP-binding residues include threonine 170, tyrosine 176, and aspartate 179.

The protein belongs to the UMP kinase family. Homohexamer.

It is found in the cytoplasm. The catalysed reaction is UMP + ATP = UDP + ADP. Its pathway is pyrimidine metabolism; CTP biosynthesis via de novo pathway; UDP from UMP (UMPK route): step 1/1. With respect to regulation, allosterically activated by GTP. Inhibited by UTP. Its function is as follows. Catalyzes the reversible phosphorylation of UMP to UDP. This Cereibacter sphaeroides (strain ATCC 17025 / ATH 2.4.3) (Rhodobacter sphaeroides) protein is Uridylate kinase.